Here is a 247-residue protein sequence, read N- to C-terminus: Cell division protein ZapD (247 aa).

It belongs to the ZapD family. As to quaternary structure, interacts with FtsZ.

It is found in the cytoplasm. Cell division factor that enhances FtsZ-ring assembly. Directly interacts with FtsZ and promotes bundling of FtsZ protofilaments, with a reduction in FtsZ GTPase activity. This is Cell division protein ZapD from Shigella flexneri.